Here is a 663-residue protein sequence, read N- to C-terminus: Protein-arginine deiminase type-1 (663 aa).

Ca(2+) contacts are provided by asparagine 153, aspartate 155, aspartate 157, aspartate 165, aspartate 176, aspartate 179, glutamine 351, glutamate 353, lysine 364, aspartate 371, serine 372, asparagine 375, phenylalanine 409, and leucine 412. Cysteine 645 (nucleophile) is an active-site residue.

The protein belongs to the protein arginine deiminase family. As to quaternary structure, monomer. The cofactor is Ca(2+). As to expression, detected in epidermal keratinocytes (at protein level). Epidermis, prostate, testis, placenta, spleen and thymus.

It is found in the cytoplasm. The enzyme catalyses L-arginyl-[protein] + H2O = L-citrullyl-[protein] + NH4(+). Functionally, catalyzes the deimination of arginine residues of proteins. The chain is Protein-arginine deiminase type-1 (PADI1) from Homo sapiens (Human).